Reading from the N-terminus, the 545-residue chain is Chaperonin GroEL 5 (545 aa).

ATP-binding positions include 30–33 (TLGP), Lys-51, 87–91 (DGTTT), Gly-415, and Asp-495.

This sequence belongs to the chaperonin (HSP60) family. In terms of assembly, forms a cylinder of 14 subunits composed of two heptameric rings stacked back-to-back. Interacts with the co-chaperonin GroES.

It is found in the cytoplasm. It carries out the reaction ATP + H2O + a folded polypeptide = ADP + phosphate + an unfolded polypeptide.. Together with its co-chaperonin GroES, plays an essential role in assisting protein folding. The GroEL-GroES system forms a nano-cage that allows encapsulation of the non-native substrate proteins and provides a physical environment optimized to promote and accelerate protein folding. The protein is Chaperonin GroEL 5 of Sinorhizobium medicae (strain WSM419) (Ensifer medicae).